A 305-amino-acid chain; its full sequence is Autophagy-related protein 27 (305 aa).

An N-terminal signal peptide occupies residues 1–22 (MARYKGLSILSLFAVFSSLASA). The Lumenal portion of the chain corresponds to 23–242 (ELDCSNIKVD…EDGGSAPSGH (220 aa)). Residues 24 to 231 (LDCSNIKVDG…EWKTKYACEN (208 aa)) form the MRH domain. 2 disulfides stabilise this stretch: Cys-26–Cys-66 and Cys-74–Cys-81. Asn-58 carries an N-linked (GlcNAc...) asparagine glycan. Asn-85 carries N-linked (GlcNAc...) asparagine glycosylation. A disulfide bridge connects residues Cys-156 and Cys-229. Residues 163–202 (LEGLESPKPDGDKKKDGEKKDDDKKDNKDKEGKSKRDGEE) form a disordered region. A helical membrane pass occupies residues 243–263 (WGFFTWVIVLYVVLVSLPLLS). The Cytoplasmic portion of the chain corresponds to 264–305 (ERVTNVRCHSQPVPVHFGLSDIRLVAQLQPVWSSRVGLASSQ).

The protein belongs to the ATG27 family.

It is found in the cytoplasmic vesicle membrane. The protein localises to the golgi apparatus membrane. The protein resides in the mitochondrion membrane. Its subcellular location is the preautophagosomal structure membrane. Functionally, effector of phosphatidylinositol 3-phosphate kinase signaling. Regulates the cytoplasm to vacuole transport (Cvt) vesicle formation. Plays a role in ATG protein retrieval from the pre-autophagosomal structure (PAS). The chain is Autophagy-related protein 27 from Arthroderma benhamiae (strain ATCC MYA-4681 / CBS 112371) (Trichophyton mentagrophytes).